The primary structure comprises 445 residues: RING finger and transmembrane domain-containing protein 2 (445 aa).

Topologically, residues 1 to 183 (MWLLAAHQVL…LLAKLCFQHK (183 aa)) are extracellular. The disordered stretch occupies residues 12–41 (KMQRRHSSNTDNIPPERSRSQALSPEASVD). A helical membrane pass occupies residues 184 to 203 (LGIAVCIGMASTFAYANSTL). The Cytoplasmic segment spans residues 204–215 (REQVSLKEKRSV). Residues 216 to 236 (LVILWILAFLAGNTMYVLYTF) traverse the membrane as a helical segment. The Extracellular portion of the chain corresponds to 237–256 (SSQQLYSSLIFLKPNLETLD). The helical transmembrane segment at 257-277 (FFDLLWIVGIADFVLKYITIA) threads the bilayer. Residues 278–330 (LKCLIVALPKIILAVKSKGKFYLVIEELSQLFRSLVPIQLWYKYIMGDDSSNS) lie on the Cytoplasmic side of the membrane. Residues 331 to 351 (YFLGGVLIVLYSLCKSFDICG) traverse the membrane as a helical segment. Residues 352–445 (RVGGLRKALK…GATSAHLQVY (94 aa)) lie on the Extracellular side of the membrane. The RING-type zinc-finger motif lies at 385 to 423 (CAICQAEFRDPMILLCQHVFCEECLCLWLDRERTCPLCR).

Its subcellular location is the membrane. Functionally, E3 ubiquitin-protein ligase that negatively regulates IL3-dependent cellular responses through IL3RA ubiquitination and degradation by the proteasome, having an anti-inflammatory effect. The protein is RING finger and transmembrane domain-containing protein 2 (Rnft2) of Mus musculus (Mouse).